The primary structure comprises 530 residues: uncharacterized protein (530 aa).

Residues 362 to 408 (NLTPKLNKTNEDIKSDSTSQPQGFPEGNRRVMENPETKVSKTDDEEM) are disordered. The segment covering 388–403 (GNRRVMENPETKVSKT) has biased composition (basic and acidic residues).

Belongs to the IIV-6 030L family.

This is an uncharacterized protein from Invertebrate iridescent virus 6 (IIV-6).